Reading from the N-terminus, the 539-residue chain is Cytochrome P450 monooxygenase pvhE (539 aa).

Residues 15-31 (VAFCSLVILCILFKVLT) traverse the membrane as a helical segment. Asparagine 379 carries N-linked (GlcNAc...) asparagine glycosylation. Cysteine 473 contributes to the heme binding site.

The protein belongs to the cytochrome P450 family. Heme serves as cofactor.

The protein resides in the membrane. Its pathway is secondary metabolite biosynthesis. Cytochrome P450 monooxygenase; part of the gene cluster that mediates the biosynthesis of varicidin A, an antifungal natural product containing a cis-octahydrodecalin core. The PKS module of pvhA together with the enoylreductase pvhC catalyze the formation of the polyketide unit which is then conjugated to L-isoleucine by the condensation domain of the NRPS module. Activity of the Dieckmann cyclase domain (RED) of pvhA results in release of an acyclic tetramate. The cytochrome P450 monooxygenase pvhE then catalyzes the oxidation of the C21 methyl group to a to carboxylate group. The methyltransferase pvhD then further methylates the pvhE product. The Diels-Alderase pvhB is able to catalyze Diels-Alder cycloaddition using both pvhE and pvhD products as substrates to form the decalin ring, yielding varicidin B and A, respectively. The chain is Cytochrome P450 monooxygenase pvhE from Talaromyces variabilis (Penicillium variabile).